Here is a 245-residue protein sequence, read N- to C-terminus: Eukaryotic translation initiation factor 4E type 2 (245 aa).

Basic and acidic residues predominate over residues 1–38 (MNNKFDALKDDDSGDHDQNEENSTQKDGEKEKTERDKN). A disordered region spans residues 1-52 (MNNKFDALKDDDSGDHDQNEENSTQKDGEKEKTERDKNQSSSKRKAVVPGPA). Serine 13 carries the post-translational modification Phosphoserine. Residues 54-57 (HPLQ) are EIF4EBP1/2/3 binding. 78–79 (YE) provides a ligand contact to mRNA. An EIF4EBP1/2/3 binding region spans residues 95 to 99 (WRFYS). Residues histidine 110 and 124 to 125 (WE) each bind mRNA. Lysine 134 carries the post-translational modification N6-acetyllysine; alternate. Residue lysine 134 forms a Glycyl lysine isopeptide (Lys-Gly) (interchain with G-Cter in ISG15); alternate linkage. The tract at residues 150–157 (NLILAMLG) is EIF4EBP1/2/3 binding. MRNA-binding positions include 174 to 179 (RFQEDI) and 222 to 224 (KMP). Lysine 222 participates in a covalent cross-link: Glycyl lysine isopeptide (Lys-Gly) (interchain with G-Cter in ISG15).

Belongs to the eukaryotic initiation factor 4E family. As to quaternary structure, interacts with EIF4EBP1, EIF4EBP2 and EIF4EBP3. Does not interact with eIF4G (EIF4G1, EIF4G2 or EIF4G3). Component of the 4EHP-GYF2 complex, at least composed of EIF4E2, GIGYF2 and ZNF598. Interacts with GIGYF2 (via the 4EHP-binding motif); the interaction is direct. Interacts with EIF4ENIF1/4E-T (via YXXXXLphi motif); increasing affinity for the 7-methylguanosine-containing mRNA cap. In terms of processing, ubiquitinated by ARIH1. The consequences of ubiquitination are however unclear: according to a report, EIF4E2 ubiquitination leads to promote EIF4E2 cap-binding and protein translation arrest. According to another report ubiquitination leads to its subsequent degradation. ISGylation enhances its cap structure-binding activity and translation-inhibition activity.

Its subcellular location is the cytoplasm. The protein localises to the P-body. Functionally, recognizes and binds the 7-methylguanosine-containing mRNA cap during an early step in the initiation. Acts as a repressor of translation initiation. In contrast to EIF4E, it is unable to bind eIF4G (EIF4G1, EIF4G2 or EIF4G3), suggesting that it acts by competing with EIF4E and block assembly of eIF4F at the cap. In P-bodies, component of a complex that promotes miRNA-mediated translational repression. Involved in virus-induced host response by mediating miRNA MIR34A-induced translational silencing which controls IFNB1 production by a negative feedback mechanism. Component of the 4EHP-GYF2 complex, a multiprotein complex that acts as a repressor of translation initiation. In association with GIGYF2, assists ribosome-associated quality control (RQC) by sequestering the mRNA cap, blocking ribosome initiation and decreasing the translational load on problematic messages. Part of a pathway that works in parallel to RQC-mediated degradation of the stalled nascent polypeptide. GIGYF2 and EIF4E2 work downstream and independently of ZNF598, which seems to work as a scaffold that can recruit them to faulty mRNA even if alternative recruitment mechanisms may exist. Its function is as follows. (Microbial infection) Upon SARS coronavirus-2/SARS-CoV-2 infection, the interaction with non-structural protein 2 (nsp2) with GIGYF2 enhances GIGYF2 binding to EIF4E2 and increases repression of translation initiation of genes involved in antiviral innate immune response such as IFNB1. In Homo sapiens (Human), this protein is Eukaryotic translation initiation factor 4E type 2.